A 207-amino-acid chain; its full sequence is Uracil phosphoribosyltransferase (207 aa).

5-phospho-alpha-D-ribose 1-diphosphate-binding positions include Arg-77, Arg-102, and 129 to 137 (DPMLATGGS). Uracil contacts are provided by residues Ile-192 and 197 to 199 (GDA). 5-phospho-alpha-D-ribose 1-diphosphate is bound at residue Asp-198.

The protein belongs to the UPRTase family. Mg(2+) serves as cofactor.

The catalysed reaction is UMP + diphosphate = 5-phospho-alpha-D-ribose 1-diphosphate + uracil. It functions in the pathway pyrimidine metabolism; UMP biosynthesis via salvage pathway; UMP from uracil: step 1/1. Allosterically activated by GTP. Functionally, catalyzes the conversion of uracil and 5-phospho-alpha-D-ribose 1-diphosphate (PRPP) to UMP and diphosphate. This Ureaplasma parvum serovar 3 (strain ATCC 27815 / 27 / NCTC 11736) protein is Uracil phosphoribosyltransferase.